A 267-amino-acid chain; its full sequence is tRNA pseudouridine synthase A (267 aa).

Asp54 (nucleophile) is an active-site residue. Tyr114 contacts substrate.

This sequence belongs to the tRNA pseudouridine synthase TruA family. Homodimer.

It carries out the reaction uridine(38/39/40) in tRNA = pseudouridine(38/39/40) in tRNA. Functionally, formation of pseudouridine at positions 38, 39 and 40 in the anticodon stem and loop of transfer RNAs. The sequence is that of tRNA pseudouridine synthase A from Tropheryma whipplei (strain TW08/27) (Whipple's bacillus).